Here is a 393-residue protein sequence, read N- to C-terminus: Endoglucanase 1 (393 aa).

An N-terminal signal peptide occupies residues M1–A26. D34 (nucleophile) is an active-site residue. The Proton donor role is filled by D152. The interval G233 to H393 is disordered. Low complexity-rich tracts occupy residues Q319–G329 and D337–A370. N-linked (GlcNAc...) asparagine glycosylation is present at N343. The span at A371 to G384 shows a compositional bias: gly residues.

This sequence belongs to the glycosyl hydrolase 45 (cellulase K) family. May also be O-glycosylated. In terms of tissue distribution, hyphal tip.

It localises to the secreted. The enzyme catalyses Endohydrolysis of (1-&gt;4)-beta-D-glucosidic linkages in cellulose, lichenin and cereal beta-D-glucans.. In Mycosarcoma maydis (Corn smut fungus), this protein is Endoglucanase 1 (EGL1).